The following is a 156-amino-acid chain: MTEIQRLLTETIESLNTREKRDNKPRFSISFIRKHPGLFIGMYVAFFATLAVMLQSETLSGSVWLLVVLFILLNGFFFFDVYPRYRYEDIDVLDFRVCYNGEWYNTRFVPAALVEAILNSPRVADVHKEQLQKMIVRKGELSFYDIFTLARAESTS.

Residues Met1–His35 lie on the Cytoplasmic side of the membrane. A helical transmembrane segment spans residues Pro36 to Ser56. The Periplasmic portion of the chain corresponds to Glu57–Thr58. The helical transmembrane segment at Leu59–Phe79 threads the bilayer. The Cytoplasmic segment spans residues Asp80 to Ser156.

It localises to the cell inner membrane. This chain is Inner membrane protein YlaC (ylaC), found in Escherichia coli (strain K12).